Reading from the N-terminus, the 391-residue chain is S-adenosylmethionine synthase 1 (391 aa).

Glu9 is a binding site for Mg(2+). Residue His15 coordinates ATP. A K(+)-binding site is contributed by Glu43. Positions 56 and 99 each coordinate L-methionine. Residues 167-169 (DGK), 235-238 (SGRF), Asp246, 252-253 (RK), Ala269, Lys273, and Lys277 contribute to the ATP site. Asp246 provides a ligand contact to L-methionine. L-methionine is bound at residue Lys277.

The protein belongs to the AdoMet synthase family. Homotetramer. Mn(2+) is required as a cofactor. Requires Mg(2+) as cofactor. It depends on Co(2+) as a cofactor. The cofactor is K(+).

Its subcellular location is the cytoplasm. It carries out the reaction L-methionine + ATP + H2O = S-adenosyl-L-methionine + phosphate + diphosphate. The protein operates within amino-acid biosynthesis; S-adenosyl-L-methionine biosynthesis; S-adenosyl-L-methionine from L-methionine: step 1/1. Catalyzes the formation of S-adenosylmethionine from methionine and ATP. The reaction comprises two steps that are both catalyzed by the same enzyme: formation of S-adenosylmethionine (AdoMet) and triphosphate, and subsequent hydrolysis of the triphosphate. The polypeptide is S-adenosylmethionine synthase 1 (METK1) (Vitis vinifera (Grape)).